We begin with the raw amino-acid sequence, 630 residues long: Ubiquitin carboxyl-terminal hydrolase MINDY-2 (630 aa).

The tract at residues 1–209 is disordered; it reads MESGPESLQP…RVPEEEEGAA (209 aa). Over residues 24–33 the composition is skewed to polar residues; the sequence is GSPQEGQQET. The residue at position 94 (Ser-94) is a Phosphoserine. Composition is skewed to low complexity over residues 141 to 163 and 170 to 191; these read EESA…SCSD and SPSL…SSEF. The Nucleophile role is filled by Cys-267. The active-site Proton acceptor is the His-449. A ubiquitin-binding domain (UBD) region spans residues 508–560; it reads GQQDQIDQDYLMALSLQQEQQSQEINWEQIPEGISDLELAKKLQEEEDRRASQ. A compositionally biased stretch (low complexity) spans 564–599; the sequence is EQEQAAAAAASASASASASASTQAPQSQPVQASPSS. The tract at residues 564 to 630 is disordered; sequence EQEQAAAAAA…EKEKNSCVIL (67 aa). A compositionally biased stretch (basic and acidic residues) spans 606 to 630; that stretch reads SERKRKEPREKDKEKEKEKNSCVIL.

Belongs to the MINDY deubiquitinase family. FAM63 subfamily.

The enzyme catalyses Thiol-dependent hydrolysis of ester, thioester, amide, peptide and isopeptide bonds formed by the C-terminal Gly of ubiquitin (a 76-residue protein attached to proteins as an intracellular targeting signal).. Functionally, hydrolase that can remove 'Lys-48'-linked conjugated ubiquitin from proteins. Can also bind to polyubiquitin chains of different linkage types, including 'Lys-6', 'Lys-11', 'Lys-29', 'Lys-33' and 'Lys-63'. May play a regulatory role at the level of protein turnover. This is Ubiquitin carboxyl-terminal hydrolase MINDY-2 (MINDY2) from Bos taurus (Bovine).